A 270-amino-acid polypeptide reads, in one-letter code: Ethanolamine ammonia-lyase small subunit (270 aa).

Valine 166, glutamate 187, and cysteine 216 together coordinate adenosylcob(III)alamin.

Belongs to the EutC family. In terms of assembly, the basic unit is a heterodimer which dimerizes to form tetramers. The heterotetramers trimerize; 6 large subunits form a core ring with 6 small subunits projecting outwards. Adenosylcob(III)alamin serves as cofactor.

It is found in the bacterial microcompartment. The enzyme catalyses ethanolamine = acetaldehyde + NH4(+). The protein operates within amine and polyamine degradation; ethanolamine degradation. In terms of biological role, catalyzes the deamination of various vicinal amino-alcohols to oxo compounds. Allows this organism to utilize ethanolamine as the sole source of nitrogen and carbon in the presence of external vitamin B12. The sequence is that of Ethanolamine ammonia-lyase small subunit from Ralstonia nicotianae (strain ATCC BAA-1114 / GMI1000) (Ralstonia solanacearum).